A 310-amino-acid polypeptide reads, in one-letter code: ADP-L-glycero-D-manno-heptose-6-epimerase (310 aa).

NADP(+) contacts are provided by residues F10 to I11, D31 to N32, K38, K53, E75 to S79, and N92. Y140 (proton acceptor) is an active-site residue. K144 provides a ligand contact to NADP(+). N169 contributes to the substrate binding site. The NADP(+) site is built by V170 and K178. K178 functions as the Proton acceptor in the catalytic mechanism. Substrate-binding positions include S180, H187, F201–S204, R209, and Y272.

This sequence belongs to the NAD(P)-dependent epimerase/dehydratase family. HldD subfamily. Homopentamer. Requires NADP(+) as cofactor.

It carries out the reaction ADP-D-glycero-beta-D-manno-heptose = ADP-L-glycero-beta-D-manno-heptose. Its pathway is nucleotide-sugar biosynthesis; ADP-L-glycero-beta-D-manno-heptose biosynthesis; ADP-L-glycero-beta-D-manno-heptose from D-glycero-beta-D-manno-heptose 7-phosphate: step 4/4. Functionally, catalyzes the interconversion between ADP-D-glycero-beta-D-manno-heptose and ADP-L-glycero-beta-D-manno-heptose via an epimerization at carbon 6 of the heptose. The polypeptide is ADP-L-glycero-D-manno-heptose-6-epimerase (Salmonella dublin (strain CT_02021853)).